The chain runs to 201 residues: Small ribosomal subunit protein uS4 (201 aa).

The disordered stretch occupies residues 1 to 42 (MARYTGPVTRKSRRLGTDLVGGDQSFEKRPYPPGQHGRARIK). The region spanning 91-157 (SRLDNVVYRA…VPFQIARETA (67 aa)) is the S4 RNA-binding domain.

It belongs to the universal ribosomal protein uS4 family. As to quaternary structure, part of the 30S ribosomal subunit. Contacts protein S5. The interaction surface between S4 and S5 is involved in control of translational fidelity.

In terms of biological role, one of the primary rRNA binding proteins, it binds directly to 16S rRNA where it nucleates assembly of the body of the 30S subunit. Functionally, with S5 and S12 plays an important role in translational accuracy. The protein is Small ribosomal subunit protein uS4 of Mycobacterium marinum (strain ATCC BAA-535 / M).